The chain runs to 396 residues: Elongation factor Tu (396 aa).

In terms of domain architecture, tr-type G spans Lys10–Glu206. The tract at residues Gly19–Thr26 is G1. Gly19–Thr26 contributes to the GTP binding site. Thr26 provides a ligand contact to Mg(2+). Positions Gly60–Ser64 are G2. Positions Asp81–Gly84 are G3. Residues Asp81 to His85 and Asn136 to Asp139 each bind GTP. A G4 region spans residues Asn136–Asp139. A G5 region spans residues Ser174–Leu176.

The protein belongs to the TRAFAC class translation factor GTPase superfamily. Classic translation factor GTPase family. EF-Tu/EF-1A subfamily. Monomer.

It is found in the cytoplasm. The catalysed reaction is GTP + H2O = GDP + phosphate + H(+). In terms of biological role, GTP hydrolase that promotes the GTP-dependent binding of aminoacyl-tRNA to the A-site of ribosomes during protein biosynthesis. The protein is Elongation factor Tu of Nitrobacter winogradskyi (strain ATCC 25391 / DSM 10237 / CIP 104748 / NCIMB 11846 / Nb-255).